The sequence spans 339 residues: Catalase-related peroxidase (339 aa).

Residues Met1 to Ala31 form the signal peptide. Residue His58 is part of the active site. Tyr328 contacts heme.

The protein belongs to the catalase family. Heme serves as cofactor.

Its subcellular location is the periplasm. Functionally, has an organic peroxide-dependent peroxidase activity. The sequence is that of Catalase-related peroxidase (srpA) from Synechococcus elongatus (strain ATCC 33912 / PCC 7942 / FACHB-805) (Anacystis nidulans R2).